Here is a 105-residue protein sequence, read N- to C-terminus: 5-hydroxymethyl-dUMP N-hydrolase (105 aa).

6 residues coordinate 5-hydroxymethyl-dUMP: glycine 6, isoleucine 8, serine 42, glycine 44, glutamate 48, and serine 72.

This sequence belongs to the 2'-deoxynucleoside 5'-phosphate N-hydrolase 1 family. In terms of assembly, monomer and homodimer.

The protein localises to the cytoplasm. The protein resides in the nucleus. It carries out the reaction 5-hydroxymethyl-dUMP + H2O = 5-hydroxymethyluracil + 2-deoxy-D-ribose 5-phosphate. In terms of biological role, part of a nucleotide salvage pathway that eliminates epigenetically modified 5-hydroxymethyl-dCMP (hmdCMP) in a two-step process entailing deamination to cytotoxic 5-hydroxymethyl-dUMP (hmdUMP), followed by its hydrolysis into 5-hydroxymethyluracil (hmU) and 2-deoxy-D-ribose 5-phosphate (deoxyribosephosphate). Catalyzes the second step in that pathway, the hydrolysis of the N-glycosidic bond in hmdUMP, degrading this cytotoxic nucleotide to avoid its genomic integration. This chain is 5-hydroxymethyl-dUMP N-hydrolase, found in Branchiostoma floridae (Florida lancelet).